We begin with the raw amino-acid sequence, 624 residues long: Chaperone protein HtpG (624 aa).

The tract at residues 1 to 336 is a; substrate-binding; it reads MNMKGQETRG…SNDLPLNVSR (336 aa). The tract at residues 337 to 552 is b; the sequence is EILQDSRITQ…ADEMSTQMAK (216 aa). The c stretch occupies residues 553–624; that stretch reads LFAAAGQQAP…IRRMNQLLTA (72 aa).

This sequence belongs to the heat shock protein 90 family. As to quaternary structure, homodimer.

It localises to the cytoplasm. In terms of biological role, molecular chaperone. Has ATPase activity. The polypeptide is Chaperone protein HtpG (Yersinia pestis bv. Antiqua (strain Antiqua)).